A 364-amino-acid chain; its full sequence is Leucine-rich repeat-containing protein 19 (364 aa).

The N-terminal stretch at 1-20 (MKVTRFMFWLFSMLLPSVKS) is a signal peptide. Over 21–264 (QASETEVPCN…SEHEPLGKSW (244 aa)) the chain is Extracellular. Residues N30, N35, N46, and N88 are each glycosylated (N-linked (GlcNAc...) asparagine). LRR repeat units follow at residues 44–69 (STNV…VLQM), 70–93 (YSLL…SFRN), 94–117 (LLNL…SFVG), 118–141 (LNEL…TFVP), 143–163 (NNLK…APQL), and 164–190 (PHLE…NWLN). The LRRCT domain occupies 174-225 (NPWNCTCGLLELHNWLNTSNVTLENENMTMCSYPDELKHDSIKSAPFTTECH). N-linked (GlcNAc...) asparagine glycans are attached at residues N177, N190, N193, N200, N241, N245, and N250. A helical membrane pass occupies residues 265–285 (AFLVGVVATVLLTSLLIFIAI). Topologically, residues 286-364 (KCPVWYNILL…IDINEVHEEK (79 aa)) are cytoplasmic.

As to quaternary structure, interacts with TRAF2 and TRAF6. Strongly expressed in kidney, also expressed in spleen, intestine and colon. Highly expressed in epithelial cells. In kidney, mainly expressed in renal collecting duct epithelial cells.

It localises to the membrane. With respect to regulation, activated by TLR ligands such as LPS, bacterial DNA and peptidoglycan. Functionally, pathogen-recognition receptor which mediates the activation of TRAF2- and TRAF6 NF-kappa-B signaling pathways and induces the expression of pro-inflammatory cytokines. In kidney, prevents infection by uropathogenic bacteria by inducing the production of cytokines, chemokines and antimicrobial substances. In gut, involved in host-microbiota interactions, plays a critical role in promoting the recruitment of immune cells and intestinal inflammation. The chain is Leucine-rich repeat-containing protein 19 from Mus musculus (Mouse).